The sequence spans 370 residues: Aspartate beta-hydroxylase domain-containing protein 2 (370 aa).

The Cytoplasmic portion of the chain corresponds to Met-1–Asn-57. The helical transmembrane segment at Ser-58–Val-78 threads the bilayer. Topologically, residues Gly-79 to Arg-370 are lumenal. An N-linked (GlcNAc...) asparagine glycan is attached at Asn-212. 2-oxoglutarate-binding residues include Trp-229 and Ser-273. Residue His-284 participates in Fe cation binding. Arg-293–His-295 contributes to the 2-oxoglutarate binding site. Position 329 (His-329) interacts with Fe cation. Arg-342 serves as a coordination point for 2-oxoglutarate.

Belongs to the aspartyl/asparaginyl beta-hydroxylase family. It depends on Fe cation as a cofactor.

It localises to the membrane. Functionally, may function as 2-oxoglutarate-dependent dioxygenase. This is Aspartate beta-hydroxylase domain-containing protein 2 (asphd2) from Xenopus tropicalis (Western clawed frog).